Consider the following 586-residue polypeptide: Arginine--tRNA ligase (586 aa).

The short motif at 131 to 141 (ANPTGPMHVGH) is the 'HIGH' region element.

Belongs to the class-I aminoacyl-tRNA synthetase family. Monomer.

The protein resides in the cytoplasm. It carries out the reaction tRNA(Arg) + L-arginine + ATP = L-arginyl-tRNA(Arg) + AMP + diphosphate. The protein is Arginine--tRNA ligase of Xanthobacter autotrophicus (strain ATCC BAA-1158 / Py2).